We begin with the raw amino-acid sequence, 818 residues long: Actin filament-associated protein 1-like 2 (818 aa).

At Tyr56 the chain carries Phosphotyrosine. A disordered region spans residues 66–163 (QNAESQGKAP…SKGKSAPYQW (98 aa)). Polar residues predominate over residues 85-94 (EPSQHSSAPQ). Residues 123 to 139 (YYEEAEPYDTSLNEDGE) are compositionally biased toward acidic residues. PH domains are found at residues 175–271 (DARI…EVSG) and 353–447 (SLET…SESG). Ser408 carries the post-translational modification Phosphoserine. The residue at position 413 (Tyr413) is a Phosphotyrosine. Position 484 is a phosphoserine (Ser484). A disordered region spans residues 513-532 (AAVEPTEEATPVADDPNERE). Residues 652–749 (AEIKLGKNRT…VKDNLKKAEA (98 aa)) are a coiled coil. A disordered region spans residues 765–787 (NVSPRPKAVTPASAPDCTPVNSA).

Interacts with SRC. Interacts with LCK when tyrosine phosphorylated. Post-translationally, tyrosine phosphorylated (by SRC). Detected in spleen and thyroid, and at lower levels in kidney, brain, lung and pancreas.

The protein resides in the cytoplasm. May play a role in a signaling cascade by enhancing the kinase activity of SRC. Contributes to SRC-regulated transcription activation. This Homo sapiens (Human) protein is Actin filament-associated protein 1-like 2 (AFAP1L2).